A 918-amino-acid chain; its full sequence is MEGSLVQSAIAPTIYRRSGTARFRVRARATMMRTMPTRTLTLGGFQGLRQTNFLDSRSVIKRDFGSIVASQISRPRGLGSRGVVRAMFERFTEKAIKVIMLAQEEARRLGHNFVGTEQILLGLIGEGTGIAAKVLKSMGINLKDARVEVEKIIGRGSGFVAVEIPFTPRAKRVLELSLEEARQLGHNYIGSEHLLLGLLREGEGVAARVLESLGADPNNIRTQVIRMVGESTEAVGAGVGGGSSGQKMPTLEEYGTNLTKLAEEGKLDPVVGRQDQIERVTQILGRRTKNNPCLIGEPGVGKTAIAEGLAQRISNGDVPETIEGKKVITLDMGLLVAGTKYRGEFEERLKKLMEEIKQNDDIILFIDEVHTLIGAGAAEGAIDAANILKPALARGELQCIGATTLDEYRKHIEKDPALERRFQPVKVPEPTVDETIQILRGLRERYELHHKLRYTDDSLIAAAQLSYQYISDRFLPDKAIDLIDEAGSRVRLRHAQLPDEAKELDKELRQVTKDKNEAVRGQDFEKAGELRDREMELKAQITAIIDKSKEMVKAETESGEVGPLVTEADIQHIVSSWTGIPVEKVSSDESDRLLKMEETLHTRIIGQDEAVKAISRAIRRARVGLKNPNRPIASFIFSGPTGVGKSELAKALAAYYFGSEEAMIRLDMSEFMERHTVSKLIGSPPGYVGYTEGGQLTEAVRRRPYTVVLFDEIEKAHPDVFNMMLQILEDGRLTDSKGRTVDFKNTLLIMTSNVGSSVIEKGGRKIGFDLDYDEKDTSYNRIKSLVTEELKQYFRPEFLNRLDEMIVFRQLTKLEVKEIADIMLKEVFDRLKAKDIDLQVTEKFRDRVVDEGYNPSYGARPLRRAIMRLLEDSLAEKMLAGEVKEGDSAIVDVDSEGKVIVLNGGSGVPEPLAPALSV.

In terms of domain architecture, Clp R spans 88-230 (FERFTEKAIK…RTQVIRMVGE (143 aa)). Repeat regions lie at residues 91–156 (FTEK…IGRG) and 166–230 (FTPR…MVGE). The tract at residues 251–498 (LEEYGTNLTK…RVRLRHAQLP (248 aa)) is i. An ATP-binding site is contributed by 296-303 (GEPGVGKT). Positions 505–540 (DKELRQVTKDKNEAVRGQDFEKAGELRDREMELKAQ) constitute a UVR domain. Residues 565–756 (VTEADIQHIV…LLIMTSNVGS (192 aa)) form an II region. 639 to 646 (GPTGVGKS) is an ATP binding site.

Belongs to the ClpA/ClpB family. ClpC subfamily. In terms of tissue distribution, widely expressed.

The protein resides in the plastid. It is found in the chloroplast. Its function is as follows. Molecular chaperone that may interact with a ClpP-like protease involved in degradation of denatured proteins in the chloroplast. This chain is Chaperone protein ClpC1, chloroplastic (CLPC1), found in Oryza sativa subsp. japonica (Rice).